The following is a 419-amino-acid chain: D-galactonate dehydratase family member SEN1436 (419 aa).

Substrate contacts are provided by Gln-45 and His-129. The active-site Proton donor/acceptor is Tyr-160. Asp-225 contributes to the Mg(2+) binding site. The Proton donor/acceptor role is filled by His-227. Residues Glu-251 and Glu-277 each contribute to the Mg(2+) site. 5 residues coordinate substrate: Glu-277, Arg-298, His-327, Asp-331, and Glu-354.

This sequence belongs to the mandelate racemase/muconate lactonizing enzyme family. GalD subfamily. In terms of assembly, homotetramer. Requires Mg(2+) as cofactor.

The enzyme catalyses D-gluconate = 2-dehydro-3-deoxy-D-gluconate + H2O. Functionally, has low D-gluconate dehydratase activity (in vitro), suggesting that it has no significant role in D-gluconate degradation in vivo. Has no detectable activity with a panel of 70 other acid sugars (in vitro). This chain is D-galactonate dehydratase family member SEN1436, found in Salmonella enteritidis PT4 (strain P125109).